The primary structure comprises 212 residues: Large ribosomal subunit protein uL1 (212 aa).

This sequence belongs to the universal ribosomal protein uL1 family. As to quaternary structure, part of the 50S ribosomal subunit.

Functionally, binds directly to 23S rRNA. Probably involved in E site tRNA release. Protein L1 is also a translational repressor protein, it controls the translation of its operon by binding to its mRNA. The chain is Large ribosomal subunit protein uL1 from Methanobrevibacter smithii (strain ATCC 35061 / DSM 861 / OCM 144 / PS).